The primary structure comprises 146 residues: Hemoglobin subunit beta (146 aa).

Residue V1 is modified to N-acetylvaline. The Globin domain maps to 2-146 (QLSGEEKAAV…VANALAHKYH (145 aa)). Phosphoserine is present on S44. K59 is subject to N6-acetyllysine. Heme b is bound at residue H63. An N6-acetyllysine modification is found at K82. Heme b is bound at residue H92. C93 carries the post-translational modification S-nitrosocysteine. Position 144 is an N6-acetyllysine (K144).

It belongs to the globin family. As to quaternary structure, heterotetramer of two alpha chains and two beta chains. Red blood cells.

Functionally, involved in oxygen transport from the lung to the various peripheral tissues. The sequence is that of Hemoglobin subunit beta (HBB) from Equus caballus (Horse).